Here is a 128-residue protein sequence, read N- to C-terminus: uncharacterized protein (128 aa).

This is an uncharacterized protein from Gallus gallus (Chicken).